The sequence spans 563 residues: Pyruvate decarboxylase isozyme 3 (563 aa).

Residue Ser2 is modified to N-acetylserine. Pyruvate-binding residues include Asp28 and His115. Lys212 is covalently cross-linked (Glycyl lysine isopeptide (Lys-Gly) (interchain with G-Cter in ubiquitin)). Phosphoserine is present on Ser223. Residue Lys233 forms a Glycyl lysine isopeptide (Lys-Gly) (interchain with G-Cter in ubiquitin) linkage. The residue at position 266 (Thr266) is a Phosphothreonine. Lys269 participates in a covalent cross-link: Glycyl lysine isopeptide (Lys-Gly) (interchain with G-Cter in ubiquitin). The residue at position 353 (Thr353) is a Phosphothreonine. Thiamine diphosphate is bound by residues Thr390 and 413 to 415 (GSI). Asp444 is a Mg(2+) binding site. Residues 445 to 446 (GS) and 471 to 476 (NDGYTI) each bind thiamine diphosphate. Residues Asn471 and Gly473 each contribute to the Mg(2+) site. Position 477 (Glu477) interacts with pyruvate. Residue Lys505 forms a Glycyl lysine isopeptide (Lys-Gly) (interchain with G-Cter in ubiquitin) linkage. Thr522 is modified (phosphothreonine).

This sequence belongs to the TPP enzyme family. As to quaternary structure, homotetramer. It depends on Mg(2+) as a cofactor. Thiamine diphosphate serves as cofactor.

It localises to the cytoplasm. The catalysed reaction is pyruvate + H(+) = acetaldehyde + CO2. It carries out the reaction 3-methyl-2-oxobutanoate + H(+) = 2-methylpropanal + CO2. It catalyses the reaction (S)-3-methyl-2-oxopentanoate + H(+) = 2-methylbutanal + CO2. The enzyme catalyses indole-3-pyruvate + H(+) = indole-3-acetaldehyde + CO2. The catalysed reaction is 3-phenylpyruvate + H(+) = 2-phenylacetaldehyde + CO2. It carries out the reaction 2-oxobutanoate + H(+) = propanal + CO2. It catalyses the reaction 2-oxopentanoate + H(+) = butanal + CO2. The enzyme catalyses 2 acetaldehyde = acetoin. The catalysed reaction is acetaldehyde + pyruvate + H(+) = acetoin + CO2. It participates in fermentation; ethanol fermentation. It functions in the pathway amino-acid degradation; Ehrlich pathway. In terms of biological role, minor of three pyruvate decarboxylases (PDC1, PDC5, PDC6) implicated in the nonoxidative conversion of pyruvate to acetaldehyde and carbon dioxide during alcoholic fermentation. Most of the produced acetaldehyde is subsequently reduced to ethanol, but some is required for cytosolic acetyl-CoA production for biosynthetic pathways. The enzyme is also one of five 2-oxo acid decarboxylases (PDC1, PDC5, PDC6, ARO10, and THI3) able to decarboxylate more complex 2-oxo acids (alpha-keto-acids) than pyruvate, which seem mainly involved in amino acid catabolism. Here the enzyme catalyzes the decarboxylation of amino acids, which, in a first step, have been transaminated to the corresponding 2-oxo acids. In a third step, the resulting aldehydes are reduced to alcohols, collectively referred to as fusel oils or alcohols. Its preferred substrates are the transaminated amino acids derived from threonine (2-oxobutanoate), norvaline (2-oxopentanoate), valine (3-methyl-2-oxobutanoate, also alpha-keto-isovalerate), isoleucine ((3S)-3-methyl-2-oxopentanoate, also alpha-keto-beta-methylvalerate), phenylalanine (phenylpyruvate), and tryptophan (3-(indol-3-yl)pyruvate), whereas transaminated leucine is no substrate. In a side-reaction the carbanionic intermediate (or active aldehyde) generated by decarboxylation or by activation of an aldehyde can react with an aldehyde via condensation (or carboligation) yielding a 2-hydroxy ketone, collectively called acyloins. The expression level of this protein in the presence of fermentable carbon sources is so low that it cannot compensate for the other two pyruvate decarboxylases to sustain fermentation. The protein is Pyruvate decarboxylase isozyme 3 (PDC6) of Saccharomyces cerevisiae (strain ATCC 204508 / S288c) (Baker's yeast).